We begin with the raw amino-acid sequence, 89 residues long: Small ribosomal subunit protein uS15 (89 aa).

This sequence belongs to the universal ribosomal protein uS15 family. Part of the 30S ribosomal subunit. Forms a bridge to the 50S subunit in the 70S ribosome, contacting the 23S rRNA.

Functionally, one of the primary rRNA binding proteins, it binds directly to 16S rRNA where it helps nucleate assembly of the platform of the 30S subunit by binding and bridging several RNA helices of the 16S rRNA. Forms an intersubunit bridge (bridge B4) with the 23S rRNA of the 50S subunit in the ribosome. In Pseudomonas putida (Arthrobacter siderocapsulatus), this protein is Small ribosomal subunit protein uS15.